The following is a 481-amino-acid chain: Glutamate--tRNA ligase (481 aa).

The short motif at 9–19 (PSPTGNLHIGT) is the 'HIGH' region element. The 'KMSKS' region motif lies at 247–251 (KLSKR). Residue Lys-250 participates in ATP binding.

It belongs to the class-I aminoacyl-tRNA synthetase family. Glutamate--tRNA ligase type 1 subfamily. In terms of assembly, monomer.

Its subcellular location is the cytoplasm. The enzyme catalyses tRNA(Glu) + L-glutamate + ATP = L-glutamyl-tRNA(Glu) + AMP + diphosphate. In terms of biological role, catalyzes the attachment of glutamate to tRNA(Glu) in a two-step reaction: glutamate is first activated by ATP to form Glu-AMP and then transferred to the acceptor end of tRNA(Glu). This chain is Glutamate--tRNA ligase, found in Trichormus variabilis (strain ATCC 29413 / PCC 7937) (Anabaena variabilis).